Reading from the N-terminus, the 241-residue chain is Phosphoadenosine 5'-phosphosulfate reductase (241 aa).

The active-site Nucleophile; cysteine thiosulfonate intermediate is Cys-235.

Belongs to the PAPS reductase family. CysH subfamily.

Its subcellular location is the cytoplasm. It catalyses the reaction [thioredoxin]-disulfide + sulfite + adenosine 3',5'-bisphosphate + 2 H(+) = [thioredoxin]-dithiol + 3'-phosphoadenylyl sulfate. It participates in sulfur metabolism; hydrogen sulfide biosynthesis; sulfite from sulfate: step 3/3. Functionally, catalyzes the formation of sulfite from phosphoadenosine 5'-phosphosulfate (PAPS) using thioredoxin as an electron donor. The polypeptide is Phosphoadenosine 5'-phosphosulfate reductase (Xanthomonas axonopodis pv. citri (strain 306)).